Consider the following 129-residue polypeptide: Fluoride-specific ion channel FluC 2 (129 aa).

The next 4 membrane-spanning stretches (helical) occupy residues 3-23, 32-52, 59-79, and 90-110; these read FLYVGVFGALGGMCRYAMNLW, ATLAVNLIGCFLLAFLMQFLA, LVILNGIGTGFIGAFTTFSAF, and GAWLFAVSYVLASFIGGLIMV. Na(+) contacts are provided by G71 and T74.

It belongs to the fluoride channel Fluc/FEX (TC 1.A.43) family.

Its subcellular location is the cell membrane. The catalysed reaction is fluoride(in) = fluoride(out). With respect to regulation, na(+) is not transported, but it plays an essential structural role and its presence is essential for fluoride channel function. Functionally, fluoride-specific ion channel. Important for reducing fluoride concentration in the cell, thus reducing its toxicity. The polypeptide is Fluoride-specific ion channel FluC 2 (Listeria monocytogenes serotype 4b (strain F2365)).